The chain runs to 317 residues: Melanocyte-stimulating hormone receptor (317 aa).

Residues 1-37 are Extracellular-facing; the sequence is MPVQGSQRRLLGSLNSTPTATPHLGLAANQTGARCRE. An N-linked (GlcNAc...) asparagine glycan is attached at asparagine 29. A helical membrane pass occupies residues 38 to 63; that stretch reads VSIPDGLFLSLGLVSLVENVLVVTAI. Residues 64–72 lie on the Cytoplasmic side of the membrane; the sequence is AKNRNLHSP. A helical transmembrane segment spans residues 73–93; it reads MYCFICCLALSDLLVSGSNML. The Extracellular segment spans residues 94-118; that stretch reads ETAVTLLLEAGALVARAAVVQQLDN. A helical membrane pass occupies residues 119–140; that stretch reads VIDVITCSSMLSSLCFLGAIAV. The Cytoplasmic portion of the chain corresponds to 141 to 163; sequence DRYISIFYALRYHSIVTLPRAQR. Residues 164–183 traverse the membrane as a helical segment; that stretch reads AIAAIWVASVLCSTLFIAYY. Over 184–191 the chain is Extracellular; the sequence is DHAAVLLC. Residues 192–211 form a helical membrane-spanning segment; that stretch reads LVVFFLAMLVLMAVLYVHML. The Cytoplasmic portion of the chain corresponds to 212 to 240; it reads ARACQHAQGIARLHKRQRLAHQGFGLKGA. A helical membrane pass occupies residues 241-266; the sequence is ATLTILLGIFFLCWGPFFLHLTLIVL. Over 267-279 the chain is Extracellular; it reads CPQHPTCSCIFKN. The helical transmembrane segment at 280–300 threads the bilayer; that stretch reads FNLFLALIICNAIIDPLIYAF. Residues 301-317 lie on the Cytoplasmic side of the membrane; it reads RSQELRRTLKEVLLCSW. A lipid anchor (S-palmitoyl cysteine) is attached at cysteine 315.

This sequence belongs to the G-protein coupled receptor 1 family. As to quaternary structure, interacts with MGRN1, but does not undergo MGRN1-mediated ubiquitination; this interaction competes with GNAS-binding and thus inhibits agonist-induced cAMP production. Interacts with OPN3; the interaction results in a decrease in MC1R-mediated cAMP signaling and ultimately a decrease in melanin production in melanocytes. Expressed in the adrenal gland.

The protein localises to the cell membrane. In terms of biological role, receptor for MSH (alpha, beta and gamma) and ACTH. The activity of this receptor is mediated by G proteins which activate adenylate cyclase. Mediates melanogenesis, the production of eumelanin (black/brown) and phaeomelanin (red/yellow), via regulation of cAMP signaling in melanocytes. The chain is Melanocyte-stimulating hormone receptor (MC1R) from Macaca mulatta (Rhesus macaque).